Reading from the N-terminus, the 357-residue chain is Cinnamyl alcohol dehydrogenase 7 (357 aa).

Cysteine 46 contributes to the Zn(2+) binding site. NADP(+) is bound at residue threonine 48. Positions 68, 69, 99, 102, 105, 113, and 162 each coordinate Zn(2+). Residues threonine 166, 187–192 (GLGGLG), 210–215 (STSERK), threonine 250, glycine 274, and 297–299 (SMV) each bind NADP(+).

Belongs to the zinc-containing alcohol dehydrogenase family. Homodimer. It depends on Zn(2+) as a cofactor. In terms of tissue distribution, expressed in the differentiation and elongation zones of primary and lateral roots. Expressed in the hypocotyl, cotyledon and leaf veins, hydathodes and trichomes. In stems, expressed in the vascular cambium region. Expressed in the style, anthers, stamen filaments, vascular tissues of sepals and stigmatic regions in flowers, and abscission, style and stigmatic regions of siliques and seed testa.

The enzyme catalyses (E)-cinnamyl alcohol + NADP(+) = (E)-cinnamaldehyde + NADPH + H(+). Its pathway is aromatic compound metabolism; phenylpropanoid biosynthesis. Its function is as follows. Involved in lignin biosynthesis. Catalyzes the final step specific for the production of lignin monomers. Catalyzes the NADPH-dependent reduction of coniferaldehyde, 5-hydroxyconiferaldehyde, sinapaldehyde, 4-coumaraldehyde and caffeyl aldehyde to their respective alcohols. This chain is Cinnamyl alcohol dehydrogenase 7 (CAD7), found in Arabidopsis thaliana (Mouse-ear cress).